Reading from the N-terminus, the 902-residue chain is Translation initiation factor IF-2 (902 aa).

Over residues 137–177 (NLDEQQRLAESDRARDEAIQRKRDEEQAAKDRVEAERKAAE) the composition is skewed to basic and acidic residues. Disordered regions lie at residues 137 to 248 (NLDE…SHVM) and 266 to 314 (HLSA…ERPT). Composition is skewed to low complexity over residues 178 to 229 (EAAA…ATPA) and 279 to 291 (RGKP…SSSS). A tr-type G domain is found at 401-570 (SRPPVVTIMG…SLQAEVLELK (170 aa)). Residues 410-417 (GHVDHGKT) form a G1 region. 410–417 (GHVDHGKT) serves as a coordination point for GTP. A G2 region spans residues 435–439 (GITQH). A G3 region spans residues 456-459 (DTPG). Residues 456 to 460 (DTPGH) and 510 to 513 (NKID) contribute to the GTP site. The segment at 510-513 (NKID) is G4. A G5 region spans residues 546-548 (SAK).

It belongs to the TRAFAC class translation factor GTPase superfamily. Classic translation factor GTPase family. IF-2 subfamily.

The protein resides in the cytoplasm. In terms of biological role, one of the essential components for the initiation of protein synthesis. Protects formylmethionyl-tRNA from spontaneous hydrolysis and promotes its binding to the 30S ribosomal subunits. Also involved in the hydrolysis of GTP during the formation of the 70S ribosomal complex. The polypeptide is Translation initiation factor IF-2 (Xanthomonas campestris pv. campestris (strain 8004)).